Consider the following 837-residue polypeptide: Semaphorin-4G (837 aa).

The signal sequence occupies residues 1–17 (MWGRLWPLLFSFLTVTA). Residues 18-673 (VPGPSLRRPS…GAQLAHDMRM (656 aa)) are Extracellular-facing. In terms of domain architecture, Sema spans 35–503 (RLTISYEELS…AASGVLQFPL (469 aa)). N-linked (GlcNAc...) asparagine glycans are attached at residues asparagine 55, asparagine 111, and asparagine 126. A disulfide bond links cysteine 104 and cysteine 115. 3 disulfides stabilise this stretch: cysteine 133–cysteine 142, cysteine 268–cysteine 375, and cysteine 292–cysteine 335. Asparagine 386 carries an N-linked (GlcNAc...) asparagine glycan. The 52-residue stretch at 505–556 (SCSRYQSCYDCILARDPYCGWDSSIHACMVATTVANRTELIQDIERGNRGCE) folds into the PSI domain. Disulfide bonds link cysteine 506/cysteine 523 and cysteine 515/cysteine 532. Residues asparagine 540 and asparagine 596 are each glycosylated (N-linked (GlcNAc...) asparagine). The Ig-like C2-type domain occupies 565–647 (PPLKTRSVLR…RMLLASYSLT (83 aa)). A disulfide bridge connects residues cysteine 582 and cysteine 630. Residues 674–694 (FYVVAIAILGGLCLILASSLL) form a helical membrane-spanning segment. Over 695 to 837 (YVACLKGGRR…LVEQLDESSV (143 aa)) the chain is Cytoplasmic. Positions 721 to 776 (SAVQLQTVSGQCPGEEDEGDDGEGTGGLESGCLQIIPGEGAPAPPPPPPPPPPAEL) are disordered. The span at 734–743 (GEEDEGDDGE) shows a compositional bias: acidic residues. A compositionally biased stretch (pro residues) spans 762–774 (PAPPPPPPPPPPA). A phosphoserine mark is found at serine 794 and serine 836.

This sequence belongs to the semaphorin family. In terms of assembly, interacts with PLXNB2. Brain, spinal cord, and several sensory organs as well as specific populations of projection neurons.

It localises to the cell membrane. Cell surface receptor for PLXNB2. May play a role in axon guidance. This Mus musculus (Mouse) protein is Semaphorin-4G (Sema4g).